The chain runs to 693 residues: Periplasmic alpha-galactoside-binding protein (693 aa).

Positions methionine 1–alanine 20 are cleaved as a signal peptide.

The protein belongs to the bacterial solute-binding protein 5 family.

Its subcellular location is the periplasm. Involved in the transport of alpha-galactosides. Required for the utilization of raffinose and melibiose. Probably acts as a periplasmic substrate-binding protein for a transport system. The protein is Periplasmic alpha-galactoside-binding protein of Rhizobium meliloti (strain 1021) (Ensifer meliloti).